Consider the following 106-residue polypeptide: Stress-responsive protein 1 (106 aa).

The protein localises to the mitochondrion. Its function is as follows. Stress-responsive protein that may play a role in regulation of cell cycle. The protein is Stress-responsive protein 1 (sro1) of Schizosaccharomyces pombe (strain 972 / ATCC 24843) (Fission yeast).